The sequence spans 309 residues: MRERVAMPIKIPDHLPAKEILLKENIFIMDESRAYTQDIRPLKICILNLMPTKQETETQLLRLLGNTPLQVDVSLLHPSTHSPRNTSKEHLNLFYKTIDEVKQQKFDGMIITGAPVETLPFHDVNYWNEMTSILDWTTTNVTSTLHICWGAQAGLYHHYGIKKKPLTTKLFGVYSHKLEVKNVNLLRGFDDVFYAPHSRHTTVSREDIERVDELIVLSSSEEAGVYIASSKDGKRVFVMGHSEYDAHTLKQEYERDVKRGIACDPPFNYFPEGNVDALPPLQWRAHSNLLFSNWLNYYVYQETPYHLDD.

Residue Cys148 is the Acyl-thioester intermediate of the active site. Positions 169 and 198 each coordinate substrate. The Proton acceptor role is filled by His241. Residue Glu243 is part of the active site. Arg255 contacts substrate.

This sequence belongs to the MetA family.

It is found in the cytoplasm. It carries out the reaction L-homoserine + acetyl-CoA = O-acetyl-L-homoserine + CoA. It functions in the pathway amino-acid biosynthesis; L-methionine biosynthesis via de novo pathway; O-acetyl-L-homoserine from L-homoserine: step 1/1. In terms of biological role, transfers an acetyl group from acetyl-CoA to L-homoserine, forming acetyl-L-homoserine. In vitro, can also use propionyl-CoA as acyl donor. The chain is Homoserine O-acetyltransferase from Shouchella clausii (Alkalihalobacillus clausii).